We begin with the raw amino-acid sequence, 556 residues long: 2-succinyl-5-enolpyruvyl-6-hydroxy-3-cyclohexene-1-carboxylate synthase (556 aa).

Belongs to the TPP enzyme family. MenD subfamily. In terms of assembly, homodimer. Mg(2+) serves as cofactor. The cofactor is Mn(2+). Requires thiamine diphosphate as cofactor.

It carries out the reaction isochorismate + 2-oxoglutarate + H(+) = 5-enolpyruvoyl-6-hydroxy-2-succinyl-cyclohex-3-ene-1-carboxylate + CO2. Its pathway is quinol/quinone metabolism; 1,4-dihydroxy-2-naphthoate biosynthesis; 1,4-dihydroxy-2-naphthoate from chorismate: step 2/7. It participates in quinol/quinone metabolism; menaquinone biosynthesis. Functionally, catalyzes the thiamine diphosphate-dependent decarboxylation of 2-oxoglutarate and the subsequent addition of the resulting succinic semialdehyde-thiamine pyrophosphate anion to isochorismate to yield 2-succinyl-5-enolpyruvyl-6-hydroxy-3-cyclohexene-1-carboxylate (SEPHCHC). The chain is 2-succinyl-5-enolpyruvyl-6-hydroxy-3-cyclohexene-1-carboxylate synthase from Staphylococcus epidermidis (strain ATCC 12228 / FDA PCI 1200).